Consider the following 429-residue polypeptide: Homocysteine synthase (429 aa).

Lys-210 is modified (N6-(pyridoxal phosphate)lysine).

The protein belongs to the trans-sulfuration enzymes family. In terms of assembly, homotetramer. Pyridoxal 5'-phosphate serves as cofactor.

It localises to the cytoplasm. The protein localises to the nucleus. It carries out the reaction O-acetyl-L-homoserine + methanethiol = L-methionine + acetate + H(+). The catalysed reaction is O-acetyl-L-homoserine + hydrogen sulfide = L-homocysteine + acetate. The protein operates within amino-acid biosynthesis; L-methionine biosynthesis via de novo pathway; L-homocysteine from O-acetyl-L-homoserine. Its function is as follows. Catalyzes the conversion of O-acetyl-L-homoserine (OAH) into homocysteine in the methionine biosynthesis pathway. Can also use O-succinyl-L-homoserine and L-homoserine as substrates. Also has cysteine synthase (O-acetylserine sulfhydrylase) activity in vitro, but in S.pombe, it seems only to be involved in the alternative pathway of methionine biosynthesis under cysteine deficiency conditions. The sequence is that of Homocysteine synthase from Schizosaccharomyces pombe (strain 972 / ATCC 24843) (Fission yeast).